Here is a 22-residue protein sequence, read N- to C-terminus: Dioicin-1 (22 aa).

The protein localises to the secreted. It is found in the extracellular space. The protein resides in the golgi apparatus. It localises to the vacuole. It catalyses the reaction Endohydrolysis of the N-glycosidic bond at one specific adenosine on the 28S rRNA.. Its function is as follows. Nicks pBR322 dsDNA. Has adenine polynucleotide glycosidase activity on herring sperm ssDNA. The sequence is that of Dioicin-1 from Phytolacca dioica (Bella sombra tree).